A 153-amino-acid polypeptide reads, in one-letter code: MKPQKSLRARAMDILSRQEVSRIGLKRKLAPHAESEEELENVLNEFAERNWQSDLRYAEAYIRSKSRKHGSLRLKQALAQQGIDEETSRNLLPDRSSEKQAAIDVLRKKFKHPAADLKEKQKQARFLAYRGFDADTVQTALKHAWDENWEDGC.

The protein belongs to the RecX family.

The protein resides in the cytoplasm. Functionally, modulates RecA activity. In Neisseria meningitidis serogroup C / serotype 2a (strain ATCC 700532 / DSM 15464 / FAM18), this protein is Regulatory protein RecX.